The sequence spans 289 residues: Rhodopsin (289 aa).

Residues 1 to 7 (YLVSPAA) are Extracellular-facing. Residues 8–32 (YAALGAYMFLLILVGFPVNFLTLYV) traverse the membrane as a helical segment. At 33–44 (TLDHKKLRTPLN) the chain is on the cytoplasmic side. The chain crosses the membrane as a helical span at residues 45-67 (YILLNLAVADLFMVLGGFTTTMY). Residues 68-81 (TSMHGYFVLGRLGC) are Extracellular-facing. A disulfide bond links Cys-81 and Cys-158. A helical membrane pass occupies residues 82-104 (NLEGFFATLGGEIALWSLVVLAI). Positions 105 to 107 (ERW) match the 'Ionic lock' involved in activated form stabilization motif. The Cytoplasmic segment spans residues 105-123 (ERWIVVCKPISNFRFTEDH). A helical transmembrane segment spans residues 124-144 (AIMGLAFSWVMALTCAVPPLV). Topologically, residues 145–173 (GWSRYIPEGMQCSCGVDYYTRAEGFNTES) are extracellular. The helical transmembrane segment at 174–195 (FVLYMFTVHFLIPLSVIFFCYG) threads the bilayer. Residues 196 to 223 (RLLCAVKEAAAAQQESETTQRAEKEVSR) lie on the Cytoplasmic side of the membrane. The helical transmembrane segment at 224-245 (MVVLMVIGFLVCWLPYASVAWW) threads the bilayer. Over 246 to 257 (IFCNQGSEFGPI) the chain is Extracellular. A helical transmembrane segment spans residues 258-279 (FMTLPAFFAKTSAIYNPLIYIC). The residue at position 267 (Lys-267) is an N6-(retinylidene)lysine. Topologically, residues 280–289 (MNKQFRHCMI) are cytoplasmic.

The protein belongs to the G-protein coupled receptor 1 family. Opsin subfamily. In terms of processing, phosphorylated on some or all of the serine and threonine residues present in the C-terminal region. Contains one covalently linked retinal chromophore.

It is found in the membrane. It localises to the cell projection. The protein localises to the cilium. Its subcellular location is the photoreceptor outer segment. Its function is as follows. Photoreceptor required for image-forming vision at low light intensity. While most salt water fish species use retinal as chromophore, most freshwater fish use 3-dehydroretinal, or a mixture of retinal and 3-dehydroretinal. Light-induced isomerization of 11-cis to all-trans retinal triggers a conformational change that activates signaling via G-proteins. Subsequent receptor phosphorylation mediates displacement of the bound G-protein alpha subunit by arrestin and terminates signaling. The chain is Rhodopsin (rho) from Procottus jeittelesii (Red sculpin).